Consider the following 214-residue polypeptide: Pyridoxine/pyridoxamine 5'-phosphate oxidase (214 aa).

Substrate is bound by residues 9–12 (RKNY) and K67. Residues 62–67 (RIVLLK), 77–78 (YT), K83, K84, and Q106 each bind FMN. The substrate site is built by Y124, R128, and S132. FMN is bound by residues 141-142 (QS) and W186. Position 192–194 (192–194 (RLH)) interacts with substrate. R196 serves as a coordination point for FMN.

Belongs to the pyridoxamine 5'-phosphate oxidase family. Homodimer. The cofactor is FMN.

It catalyses the reaction pyridoxamine 5'-phosphate + O2 + H2O = pyridoxal 5'-phosphate + H2O2 + NH4(+). It carries out the reaction pyridoxine 5'-phosphate + O2 = pyridoxal 5'-phosphate + H2O2. It participates in cofactor metabolism; pyridoxal 5'-phosphate salvage; pyridoxal 5'-phosphate from pyridoxamine 5'-phosphate: step 1/1. It functions in the pathway cofactor metabolism; pyridoxal 5'-phosphate salvage; pyridoxal 5'-phosphate from pyridoxine 5'-phosphate: step 1/1. In terms of biological role, catalyzes the oxidation of either pyridoxine 5'-phosphate (PNP) or pyridoxamine 5'-phosphate (PMP) into pyridoxal 5'-phosphate (PLP). This chain is Pyridoxine/pyridoxamine 5'-phosphate oxidase, found in Leptospira borgpetersenii serovar Hardjo-bovis (strain JB197).